Consider the following 310-residue polypeptide: Oxygen-dependent coproporphyrinogen-III oxidase (310 aa).

S93 contacts substrate. A divalent metal cation is bound by residues H97 and H107. The Proton donor role is filled by H107. Substrate is bound at residue 109–111; that stretch reads NVR. Positions 146 and 176 each coordinate a divalent metal cation. Positions 241 to 276 are important for dimerization; the sequence is YVEFNLVYDRGTLFGLQSGGRTESILMSLPPQVRWS. Substrate is bound at residue 259–261; that stretch reads GGR.

This sequence belongs to the aerobic coproporphyrinogen-III oxidase family. As to quaternary structure, homodimer. It depends on a divalent metal cation as a cofactor.

The protein resides in the cytoplasm. It catalyses the reaction coproporphyrinogen III + O2 + 2 H(+) = protoporphyrinogen IX + 2 CO2 + 2 H2O. It functions in the pathway porphyrin-containing compound metabolism; protoporphyrin-IX biosynthesis; protoporphyrinogen-IX from coproporphyrinogen-III (O2 route): step 1/1. In terms of biological role, involved in the heme biosynthesis. Catalyzes the aerobic oxidative decarboxylation of propionate groups of rings A and B of coproporphyrinogen-III to yield the vinyl groups in protoporphyrinogen-IX. This chain is Oxygen-dependent coproporphyrinogen-III oxidase, found in Pseudomonas fluorescens (strain SBW25).